Reading from the N-terminus, the 564-residue chain is MERIVIALAIINIVKGDQICIGYHANNSTEQVDTIMEKNVTVTHAQDILEKEHNGKLCSLKGVRPLILKDCSVAGWLLGNPMCDEFLNVPEWSYIVEKDNPVNGLCYPGDFNDYEELKHLMSSTNHFEKIQIIPRNSWSTHDASSGVSSACPYNGRSSFFRNVVWLIKKNNAYPTIKRTYNNTNVEDLLILWGIHHPNDAAEQTKLYQNSNTYVSVGTSTLNQRSIPEIATRPKVNGQSGRMEFFWTILRPNDAISFESNGNFIAPEYAYKIVKKGDSAIMKSELEYGNCDTKCQTPVGAINSSMPFHNVHPLTIGECPKYVKSDKLVLATGLRNVPQRETRGLFGAIAGFIEGGWQGMVDGWYGYHHSNEQGSGYAADKESTQKAIDGITNKVNSIIDKMNTQFEAVGKEFNNLERRIENLNKKMEDGFLDVWTYNAELLVLMENERTLDFHDSNVKNLYDKVRLQLRDNAKELGNGCFEFYHKCDNECMESVRNGTYDYPQYSEESRLNREEIDGVKLESMGTYQILSIYSTVASSLALAIMVAGLSFWMCSNGSLQCRICI.

The signal sequence occupies residues 1-16 (MERIVIALAIINIVKG). The Extracellular segment spans residues 17–527 (DQICIGYHAN…VKLESMGTYQ (511 aa)). 6 cysteine pairs are disulfide-bonded: Cys-20–Cys-479, Cys-58–Cys-290, Cys-71–Cys-83, Cys-106–Cys-151, Cys-294–Cys-318, and Cys-486–Cys-490. Asn-26, Asn-27, and Asn-39 each carry an N-linked (GlcNAc...) asparagine; by host glycan. N-linked (GlcNAc...) asparagine; by host glycans are attached at residues Asn-181 and Asn-302. An N-linked (GlcNAc...) asparagine; by host glycan is attached at Asn-496. The helical transmembrane segment at 528 to 548 (ILSIYSTVASSLALAIMVAGL) threads the bilayer. Topologically, residues 549 to 564 (SFWMCSNGSLQCRICI) are cytoplasmic. S-palmitoyl cysteine; by host attachment occurs at residues Cys-553, Cys-560, and Cys-563.

It belongs to the influenza viruses hemagglutinin family. As to quaternary structure, homotrimer of disulfide-linked HA1-HA2. Post-translationally, palmitoylated. In natural infection, inactive HA is matured into HA1 and HA2 outside the cell by one or more trypsin-like, arginine-specific endoprotease secreted by the bronchial epithelial cells. One identified protease that may be involved in this process is secreted in lungs by club cells.

It is found in the virion membrane. The protein localises to the host apical cell membrane. Binds to sialic acid-containing receptors on the cell surface, bringing about the attachment of the virus particle to the cell. This attachment induces virion internalization of about two third of the virus particles through clathrin-dependent endocytosis and about one third through a clathrin- and caveolin-independent pathway. Plays a major role in the determination of host range restriction and virulence. Class I viral fusion protein. Responsible for penetration of the virus into the cell cytoplasm by mediating the fusion of the membrane of the endocytosed virus particle with the endosomal membrane. Low pH in endosomes induces an irreversible conformational change in HA2, releasing the fusion hydrophobic peptide. Several trimers are required to form a competent fusion pore. In terms of biological role, binds to sialic acid-containing receptors on the cell surface, bringing about the attachment of the virus particle to the cell. This attachment induces virion internalization either through clathrin-dependent endocytosis or through clathrin- and caveolin-independent pathway. Plays a major role in the determination of host range restriction and virulence. Class I viral fusion protein. Responsible for penetration of the virus into the cell cytoplasm by mediating the fusion of the membrane of the endocytosed virus particle with the endosomal membrane. Low pH in endosomes induces an irreversible conformational change in HA2, releasing the fusion hydrophobic peptide. Several trimers are required to form a competent fusion pore. This is Hemagglutinin from Aves.